The following is a 757-amino-acid chain: MLAKAAASASSSMEKGSVYLDFTDIKCIQYTSSIRKLEQLVHVCKVLLRNLSMKSNENLIPLSNIVIALGSGFQFNVSAAIEKRIELLSQFRSCKANATNLPLSTTSLKLEVDLVPVEEDSVLFVSKFYNKELQSQLLTTLQRVAEDSLQIYQARIRQLTMERNSNRPTDLSGRTTIFNEDALNDLLSPNELAFGLDLLVNIRNRSTDTSSSAFFALALPILEKFRSNLNDKCIPPIRSYYTSIMKFSRTKGVFSNNVLIQLPYWQFTLHRMYAASLRAKCLIDVIRAVLRQIYIPNKHHFHDNTTKLHSKNLHEYSELLEELETFCFTQELEKDLIEAFKSYGNQNTVYQVQFNNISSAYQRLLLKSTQMLRKAAKLVDSFSTQWKSISDNMKASKYDDMNIDEMAKMAEEKLAVDELAYNEKIKEQERQREEKKNSSLSQKNTSSSSSITSNSSSLNVSPNILSPLRLSRTSSVSRSEESRSPSSPIPFTDAKSNISAKKTRSVRTRNRSSSLQSVSSLEDTSTARNGMRSNSLQSGSLNTQRIVQNAYSKALLSLNEKRGPRLTPTKLNNSIRSKSPSPTVSRQNSVKQRNKVNILKLNEVDEDDINEKFHDLKLDDDTLIVSQEVLSPEGSETPKIIVSVADDNQSSSNNDSEVEGIVKKVRFIGVPPMSQDENPEPKRRGWYKKPAVLHYPPPPAQHSLQKFRTTQEGLAFRTSLISRDQGSDKKFGFDSMYSSGQGADTKIVGKIKDKLFK.

Residues 427–437 show a composition bias toward basic and acidic residues; it reads EQERQREEKKN. Disordered stretches follow at residues 427-541 and 558-590; these read EQER…SGSL and LNEK…QNSV. Positions 438 to 477 are enriched in low complexity; the sequence is SSLSQKNTSSSSSITSNSSSLNVSPNILSPLRLSRTSSVS. Basic residues predominate over residues 501-510; sequence KKTRSVRTRN. The segment covering 511 to 521 has biased composition (low complexity); it reads RSSSLQSVSSL. 2 stretches are compositionally biased toward polar residues: residues 522 to 541 and 569 to 590; these read EDTS…SGSL and TKLN…QNSV.

This sequence belongs to the GIP4 family. In terms of assembly, interacts with GLC7.

It localises to the cytoplasm. Functionally, GLC7 phosphatase-regulatory protein involved in GLC7 subcellular redistribution and chromosome segregation. This is GLC7-interacting protein 4 (GIP4) from Kluyveromyces lactis (strain ATCC 8585 / CBS 2359 / DSM 70799 / NBRC 1267 / NRRL Y-1140 / WM37) (Yeast).